The following is a 127-amino-acid chain: Protein ApaG (127 aa).

The ApaG domain maps to 3–127; the sequence is DADVYAISVE…FVLAIPRTLH (125 aa).

The chain is Protein ApaG from Stenotrophomonas maltophilia (strain K279a).